We begin with the raw amino-acid sequence, 425 residues long: Tyrosine--tRNA ligase (425 aa).

L-tyrosine is bound at residue Tyr-33. A 'HIGH' region motif is present at residues 38 to 47 (PTADSLHLGN). 2 residues coordinate L-tyrosine: Tyr-170 and Gln-174. The 'KMSKS' region signature appears at 230–234 (KFGKS). Residue Lys-233 coordinates ATP. An S4 RNA-binding domain is found at 356-422 (KKLIDLLVET…GKKNKMIIRL (67 aa)).

The protein belongs to the class-I aminoacyl-tRNA synthetase family. TyrS type 1 subfamily. Homodimer.

It is found in the cytoplasm. The enzyme catalyses tRNA(Tyr) + L-tyrosine + ATP = L-tyrosyl-tRNA(Tyr) + AMP + diphosphate + H(+). Functionally, catalyzes the attachment of tyrosine to tRNA(Tyr) in a two-step reaction: tyrosine is first activated by ATP to form Tyr-AMP and then transferred to the acceptor end of tRNA(Tyr). The chain is Tyrosine--tRNA ligase from Protochlamydia amoebophila (strain UWE25).